Reading from the N-terminus, the 596-residue chain is MLGLATTVTLESSGCSSKMCFRLLCSVSSRPARGTFVEDACWVYIISHTFFPFNMTWRVVNIFISLSMDGALMEIGPYRLQDDHTLIYNNGSWDEFANLLFVDQPVGTGFSYVSTDSYVRELGPMADQFVTFLERWFNVFPEYERDDIYIAGESYAGQYIPYIADAIVRRNEKLSANGTSWNVQGLLIGNGWISPLEQYRSYLPFSYKEGVLDKNSDGAKAAESQLSKCMSKLKEVGKFGVHVDECERVLELILDTTKVDGKCINMYDVRLEDTPDACGMNWPPDISLVTSYLRRPDVVKALNINEDKTTGWRECSPGVGRNLQATESVPSVQLLPGLLERGMPIVLFSGDKDLICNHIGTEDLIHNMTWLNATGFELSPDVWAPRHNWEFEGSAAGIYQQARNLTYVKFYNASHMVPFDFPRRSRDMLDRFLGIDITSIGGDPADSRIDGLKGAPTSVGAHPNSTTAEEKEKEKIKIAAWEAYYKSGEVALVVVAIAASLWGFFIWRSKRREKGLEYKGIYPNLESFSSASLATFRGKRRGRMDVESAPRPDEAELETLYNAAEGSDPQDGEENFSDGKGDNEKAQSHAGMGKSR.

The first 17 residues, 1–17 (MLGLATTVTLESSGCSS), serve as a signal peptide directing secretion. Residues 18–486 (KMCFRLLCSV…KIAAWEAYYK (469 aa)) are Lumenal-facing. N-linked (GlcNAc...) asparagine glycosylation is found at N54 and N90. S154 is an active-site residue. Residues N177, N367, N372, N404, N412, and N464 are each glycosylated (N-linked (GlcNAc...) asparagine). Positions 447-469 (SRIDGLKGAPTSVGAHPNSTTAE) are disordered. A helical transmembrane segment spans residues 487–507 (SGEVALVVVAIAASLWGFFIW). The Cytoplasmic portion of the chain corresponds to 508 to 596 (RSKRREKGLE…QSHAGMGKSR (89 aa)). The interval 539 to 596 (KRRGRMDVESAPRPDEAELETLYNAAEGSDPQDGEENFSDGKGDNEKAQSHAGMGKSR) is disordered. 2 stretches are compositionally biased toward basic and acidic residues: residues 543–554 (RMDVESAPRPDE) and 577–587 (SDGKGDNEKAQ).

It belongs to the peptidase S10 family.

Its subcellular location is the golgi apparatus. The protein resides in the trans-Golgi network membrane. The catalysed reaction is Preferential release of a C-terminal arginine or lysine residue.. In terms of biological role, protease with a carboxypeptidase B-like function involved in the C-terminal processing of the lysine and arginine residues from protein precursors. Promotes cell fusion and is involved in the programmed cell death. The protein is Pheromone-processing carboxypeptidase KEX1 (KEX1) of Arthroderma benhamiae (strain ATCC MYA-4681 / CBS 112371) (Trichophyton mentagrophytes).